Reading from the N-terminus, the 421-residue chain is Chitin deacetylase (421 aa).

Positions 1 to 21 (MQIKTFALSAAIAQVATLALA) are cleaved as a signal peptide. N-linked (GlcNAc...) asparagine glycans are attached at residues Asn39, Asn70, Asn87, and Asn106. Positions 157–349 (ETWGLTYDDG…YKQVIDVATC (193 aa)) constitute a NodB homology domain. Asp164 serves as the catalytic Proton acceptor. Asp164 lines the acetate pocket. Residue Asp165 coordinates Co(2+). N-linked (GlcNAc...) asparagine glycosylation occurs at Asn168. Co(2+) contacts are provided by His214 and His218. Tyr255 is an acetate binding site. N-linked (GlcNAc...) asparagine glycosylation occurs at Asn307. The active-site Proton donor is His320. N-linked (GlcNAc...) asparagine glycosylation is found at Asn323, Asn351, and Asn367. Thr390 carries GPI-anchor amidated threonine lipidation. A propeptide spans 391–421 (AAAHIQASTSGAMSVLPNLALISAFIATLLF) (removed in mature form).

The protein belongs to the polysaccharide deacetylase family. Co(2+) is required as a cofactor.

The protein localises to the secreted. Its subcellular location is the cell wall. It localises to the cell membrane. It carries out the reaction [(1-&gt;4)-N-acetyl-beta-D-glucosaminyl](n) + n H2O = chitosan + n acetate. Functionally, hydrolyzes the N-acetamido groups of N-acetyl-D-glucosamine residues in chitin to form chitosan and acetate. This Amylomyces rouxii (Filamentous fungus) protein is Chitin deacetylase.